The chain runs to 684 residues: Chaperone protein HtpG (684 aa).

An a; substrate-binding region spans residues 1-329; that stretch reads MSKKGTIGVT…SPDIPLNVSR (329 aa). Residues 330-548 are b; it reads SYLQSDANVK…FMRRMRDMAQ (219 aa). Positions 549–684 are c; the sequence is LQPGMSFYGE…EFIRRSQRLL (136 aa).

This sequence belongs to the heat shock protein 90 family. In terms of assembly, homodimer.

Its subcellular location is the cytoplasm. Its function is as follows. Molecular chaperone. Has ATPase activity. This Porphyromonas gingivalis (strain ATCC 33277 / DSM 20709 / CIP 103683 / JCM 12257 / NCTC 11834 / 2561) protein is Chaperone protein HtpG.